A 131-amino-acid polypeptide reads, in one-letter code: Nuclear envelope phosphatase-regulatory subunit 1 homolog (131 aa).

The next 2 helical transmembrane spans lie at 33 to 53 (LLAVVLSAMSMCTAISAWYWL) and 68 to 88 (WIHPVFTVATLTLVVLFILGI).

This sequence belongs to the CNEP1R1 family.

Its subcellular location is the nucleus membrane. The protein resides in the cytoplasm. Its function is as follows. May form with the serine/threonine protein phosphatase l(1)G0269 an active complex dephosphorylating and activating lipin-like phosphatases. Lipins are phosphatidate phosphatases that catalyze the conversion of phosphatidic acid to diacylglycerol and control the metabolism of fatty acids at different levels. This Drosophila melanogaster (Fruit fly) protein is Nuclear envelope phosphatase-regulatory subunit 1 homolog.